Here is a 402-residue protein sequence, read N- to C-terminus: F-box/kelch-repeat protein At4g39590 (402 aa).

Residues 1 to 14 (MFPMSSTSRSSAAN) are compositionally biased toward low complexity. Positions 1 to 37 (MFPMSSTSRSSAANNRKDPPRKKNKETPSPVTREPTS) are disordered. The segment covering 27–37 (TPSPVTREPTS) has biased composition (polar residues). The F-box domain occupies 35 to 81 (PTSIDSLPNDLLLNCFARVSRMYYPALSRVSKRFRSIVTSPEIYNTR). Kelch repeat units follow at residues 143–198 (NIYR…VVDG), 199–246 (KIYV…YRRA), 255–300 (KLYL…LFYW), and 302–341 (QGVFKWYDSKVSSWKQLKGLEGLPDDFSQREYCKLVDLGG).

The sequence is that of F-box/kelch-repeat protein At4g39590 from Arabidopsis thaliana (Mouse-ear cress).